Here is a 123-residue protein sequence, read N- to C-terminus: Protein lgg-1 (123 aa).

Glycine 116 carries Phosphatidylethanolamine amidated glycine lipidation. The propeptide at 117–123 (GEVEKKE) is removed in mature form.

The protein belongs to the ATG8 family. Interacts with sepa-1 (via the LIR motifs); the interaction is direct. Interacts with allo-1 (via the LIR motif). Interacts with sqst-1 (via the LIR motifs); the interaction is direct. Both lipidated and unlipidated forms interact with epg-7 (via the LIR motif); the interaction is direct. Interacts with epg-2 (via the LIR motifs); the interaction is direct. Interacts with atg-13; the interaction is direct. Interacts with unc-51 (via the LIR motif); the interaction is direct. Interacts with atg-7; the interaction is direct. Interacts with atg-3. The interaction with atg-7 and atg-3 may be required for the lipidation of lgg-1. Post-translationally, cleaved by atg-4.1 and/or atg-4.2, after Gly-116 to form a thioester bond with 'Cys-523' of atg-7 (E1-like activating enzyme) before being transferred to 'Cys-255' of atg-3 (E2 conjugating enzyme), in order to be amidated with phosphatidylethanolamine. This lipid modification anchors lgg-1 to membranes and can be reversed by atg-4.2, releasing soluble lgg-1. C-terminal cleavage is essential for autophagosome initiation and biogenesis. Lipidation is not essential for autophagy or development but the lipidated form is involved in cargo recognition and autophagosome biogenesis. Lipidation regulates lgg-2-positive autophagosome formation. Expressed in PLML touch receptor neuron and in the ventral nerve cord. Expressed in AIY interneurons.

It is found in the preautophagosomal structure. The protein localises to the cytoplasmic vesicle. It localises to the autophagosome. Its subcellular location is the autophagosome membrane. The protein resides in the lysosome lumen. It is found in the mitochondrion. The protein localises to the cytoplasm. It localises to the phagosome membrane. Its subcellular location is the cell membrane. The protein resides in the cell projection. It is found in the dendrite. The protein localises to the perikaryon. Functionally, ubiquitin-like modifier involved in the formation of autophagosomal vacuoles (autophagosomes). When lipidated mediates tethering between adjacent membranes and stimulates membrane fusion during autophagy. Recruits lipidated-lgg-2 to maturing autophagosomes. Acts in the aggrephagy pathway, which is the macroautophagic degradation of ubiquitinated protein aggregates, and preferentially interacts with autophagy proteins and substrates containing LIR motifs to mediate autophagosome formation and protein aggregate degradation. In particular, binds to components of the unc-51-atg-13 complex to regulate autophagosome formation and cargo sequestration. Required for the degradation of specific sepa-1- and sqst-1-containing protein aggregates during embryogenesis. Involved in allophagy, which is an autophagic process in which paternal mitochondria and organelles are degraded during fertilization, and moreover is required for the formation of lgg-2-positive allophagic autophagosomes in embryos. Involved in the clearance of apoptotic cells by promoting the delivery of engulfed apoptotic cells to the lysosome. Plays a role in the distribution and clearance of germ cell specific P-granules from somatic cells. Also plays a role in the autophagy-mediated degradation of ribosomal RNA and ribosomal proteins in lysosomes. Involved in xenophagy, the autophagy-mediated degradation of pathogens and pathogen products, such as toxins. Required for normal survival when exposed to pathogenic bacteria S.typhimurium probably by promoting autophagic degradation of intracellular S.typhimurium. Also plays a role in membrane-pore repair. Plays a role in mitophagy. Essential for dauer development and longevity, including longevity in response to moderate, short-term heat shock, also known as a hormetic heat shock. The sequence is that of Protein lgg-1 from Caenorhabditis elegans.